A 470-amino-acid chain; its full sequence is Trigger factor (470 aa).

A PPIase FKBP-type domain is found at 164–243 (GDYVVIDMTA…VTAVKVQELP (80 aa)). Composition is skewed to acidic residues over residues 424–438 (ETDAEDAAEGVESVE) and 445–470 (AEDDAEETSDEPAAEDTATEDEAAKA). A disordered region spans residues 424–470 (ETDAEDAAEGVESVEVDLSAAAEDDAEETSDEPAAEDTATEDEAAKA).

Belongs to the FKBP-type PPIase family. Tig subfamily.

It is found in the cytoplasm. It catalyses the reaction [protein]-peptidylproline (omega=180) = [protein]-peptidylproline (omega=0). Its function is as follows. Involved in protein export. Acts as a chaperone by maintaining the newly synthesized protein in an open conformation. Functions as a peptidyl-prolyl cis-trans isomerase. The protein is Trigger factor of Beutenbergia cavernae (strain ATCC BAA-8 / DSM 12333 / CCUG 43141 / JCM 11478 / NBRC 16432 / NCIMB 13614 / HKI 0122).